The primary structure comprises 243 residues: ATP synthase subunit b, mitochondrial (243 aa).

Belongs to the eukaryotic ATPase B chain family. As to quaternary structure, F-type ATPases have 2 components, CF(1) - the catalytic core - and CF(0) - the membrane proton channel. CF(1) has five subunits: alpha(3), beta(3), gamma(1), delta(1), epsilon(1). CF(0) has three main subunits: a, b and c.

Its subcellular location is the mitochondrion. It localises to the mitochondrion inner membrane. Its function is as follows. Mitochondrial membrane ATP synthase (F(1)F(0) ATP synthase or Complex V) produces ATP from ADP in the presence of a proton gradient across the membrane which is generated by electron transport complexes of the respiratory chain. F-type ATPases consist of two structural domains, F(1) - containing the extramembraneous catalytic core, and F(0) - containing the membrane proton channel, linked together by a central stalk and a peripheral stalk. During catalysis, ATP synthesis in the catalytic domain of F(1) is coupled via a rotary mechanism of the central stalk subunits to proton translocation. Part of the complex F(0) domain and the peripheric stalk, which acts as a stator to hold the catalytic alpha(3)beta(3) subcomplex and subunit a/ATP6 static relative to the rotary elements. In Drosophila melanogaster (Fruit fly), this protein is ATP synthase subunit b, mitochondrial.